Here is a 231-residue protein sequence, read N- to C-terminus: NADH-ubiquinone oxidoreductase chain 4 (231 aa).

Helical transmembrane passes span 1–21 (PIAGSMVLAAILLKLGGYGII), 34–54 (MFLPLVVLALWGAVLANLTCL), 63–85 (IAYSSISHMGLVAAAIIIQTPWG), 89–111 (GMTLMIAHGFTSSALFCLANTTY), 118–138 (ILILTRGFHNILPMATTWWLL), and 156–176 (LLIMSALFNWCPTTIIMLGLS).

Belongs to the complex I subunit 4 family.

The protein localises to the mitochondrion membrane. The catalysed reaction is a ubiquinone + NADH + 5 H(+)(in) = a ubiquinol + NAD(+) + 4 H(+)(out). In terms of biological role, core subunit of the mitochondrial membrane respiratory chain NADH dehydrogenase (Complex I) that is believed to belong to the minimal assembly required for catalysis. Complex I functions in the transfer of electrons from NADH to the respiratory chain. The immediate electron acceptor for the enzyme is believed to be ubiquinone. The protein is NADH-ubiquinone oxidoreductase chain 4 (MT-ND4) of Calloselasma rhodostoma (Malayan pit viper).